Reading from the N-terminus, the 107-residue chain is MVARKTYILKLYVAGNTPNSMRALNTLKEILENEFKGVYALKVIDVLKQPQLAEEDKILATPTLAKILPPPVRRIIGDLSDREKVLIGLDLLFDELSESEYSGGTKN.

This sequence belongs to the KaiB family. May undergo a major conformational rearrangment; in the free state forms homooligomers. When bound to KaiC switches to a monomeric thioredoxin-fold (KaiB(fs)). The active oscillator complex is probably KaiC(6):KaiB(6).

In terms of biological role, component of the KaiBC clock protein complex, which constitutes the main circadian regulator in cyanobacteria; it may modify the ATPase activity of KaiC. Does not stimulate dephosphorylation of endogenous KaiC, although it does stimulate dephosphorylation of KiaC from S.elongatus strain PCC 7942. Reduces the ATPase activity of KaiC by about half in vitro, which may be its function in vivo. Its function is as follows. May be a metamorphic protein which reversibly switches between an inactive tetrameric fold and a rare, thioredoxin-like monomeric fold (KaiB(fs)). KaiB(fs) binds phospho-KaiC, and perhaps clock output effectors. The chain is Circadian clock oscillator protein KaiB from Prochlorococcus marinus subsp. pastoris (strain CCMP1986 / NIES-2087 / MED4).